A 2178-amino-acid polypeptide reads, in one-letter code: Genome polyprotein (2178 aa).

Residues 1–20 are disordered; it reads MGAQVSTQKSGSHENQNILT. Glycine 2 carries the N-myristoyl glycine; by host lipid modification. The Cytoplasmic segment spans residues 2–1490; sequence GAQVSTQKSG…AVNQASMIIN (1489 aa). An amphipathic alpha-helix region spans residues 564 to 584; it reads ALTEGLSDELEEVIVEKTKQT. Catalysis depends on for protease 2A activity residues histidine 875 and aspartate 893. Cysteine 910 and cysteine 912 together coordinate Zn(2+). The active-site For protease 2A activity is the cysteine 964. 2 residues coordinate Zn(2+): cysteine 970 and histidine 972. The segment at 1100 to 1172 is membrane-binding; that stretch reads NDGWFRKFND…HDSNPTQEKR (73 aa). The interval 1100–1238 is oligomerization; the sequence is NDGWFRKFND…TPGSGKSLTT (139 aa). The tract at residues 1121–1125 is RNA-binding; sequence ANKIS. The SF3 helicase domain maps to 1204 to 1360; it reads KNKITNYMQF…STYTKNGKLN (157 aa). Positions 1368, 1371, 1380, and 1385 each coordinate Zn(2+). Residues 1368–1385 form a C4-type zinc finger; that stretch reads CKDCHQPSNFKKCCPLVC. Positions 1412–1419 are RNA-binding; sequence DYKNKVKI. The interval 1423–1428 is oligomerization; that stretch reads LEVLFQ. An intramembrane segment occupies 1491–1506; sequence TILMFVSTLGIVYVIY. Residues 1507–2178 lie on the Cytoplasmic side of the membrane; sequence KLFAQTQGPY…VLRRRWLDLF (672 aa). Residue tyrosine 1516 is modified to O-(5'-phospho-RNA)-tyrosine. In terms of domain architecture, Peptidase C3 spans 1537-1714; sequence GPNTEFALSL…FSAQLKKQYF (178 aa). Catalysis depends on for protease 3C activity residues histidine 1576, glutamate 1607, and cysteine 1682. One can recognise a RdRp catalytic domain in the interval 1946 to 2059; that stretch reads HLMAFDYSNF…SYPFELDSNI (114 aa). Mg(2+)-binding residues include aspartate 1951 and aspartate 2045.

It belongs to the picornaviruses polyprotein family. In terms of assembly, interacts with capsid protein VP1 and capsid protein VP3 to form heterotrimeric protomers. As to quaternary structure, interacts with capsid protein VP0, and capsid protein VP3 to form heterotrimeric protomers. Five protomers subsequently associate to form pentamers which serve as building blocks for the capsid. Interacts with capsid protein VP2, capsid protein VP3 and capsid protein VP4 following cleavage of capsid protein VP0. Interacts with capsid protein VP1 and capsid protein VP3 in the mature capsid. In terms of assembly, interacts with capsid protein VP0 and capsid protein VP1 to form heterotrimeric protomers. Five protomers subsequently associate to form pentamers which serve as building blocks for the capsid. Interacts with capsid protein VP4 in the mature capsid. Interacts with protein 2C; this interaction may be important for virion morphogenesis. As to quaternary structure, interacts with capsid protein VP1 and capsid protein VP3. Homodimer. In terms of assembly, homohexamer; forms a hexameric ring structure with 6-fold symmetry characteristic of AAA+ ATPases. Interacts (via N-terminus) with host RTN3 (via reticulon domain); this interaction is important for viral replication. Interacts with capsid protein VP3; this interaction may be important for virion morphogenesis. As to quaternary structure, interacts with protein 3CD. Homodimer. Interacts with host GBF1. Interacts (via GOLD domain) with host ACBD3 (via GOLD domain); this interaction allows the formation of a viral protein 3A/ACBD3 heterotetramer with a 2:2 stoichiometry, which will stimulate the recruitment of host PI4KB in order to synthesize PI4P at the viral RNA replication sites. In terms of assembly, interacts with RNA-directed RNA polymerase. As to quaternary structure, interacts with protein 3AB and with RNA-directed RNA polymerase. Interacts with Viral protein genome-linked and with protein 3CD. It depends on Mg(2+) as a cofactor. In terms of processing, specific enzymatic cleavages in vivo by the viral proteases yield processing intermediates and the mature proteins. Post-translationally, myristoylation is required for the formation of pentamers during virus assembly. Further assembly of 12 pentamers and a molecule of genomic RNA generates the provirion. During virion maturation, immature virions are rendered infectious following cleavage of VP0 into VP4 and VP2. This maturation seems to be an autocatalytic event triggered by the presence of RNA in the capsid and it is followed by a conformational change infectious virion. In terms of processing, myristoylation is required during RNA encapsidation and formation of the mature virus particle. Post-translationally, VPg is uridylylated by the polymerase into VPg-pUpU. This acts as a nucleotide-peptide primer for the genomic RNA replication.

The protein localises to the virion. It is found in the host cytoplasm. Its subcellular location is the host cytoplasmic vesicle membrane. The protein resides in the host nucleus. It carries out the reaction a ribonucleoside 5'-triphosphate + H2O = a ribonucleoside 5'-diphosphate + phosphate + H(+). The enzyme catalyses Selective cleavage of Tyr-|-Gly bond in the picornavirus polyprotein.. The catalysed reaction is RNA(n) + a ribonucleoside 5'-triphosphate = RNA(n+1) + diphosphate. It catalyses the reaction Selective cleavage of Gln-|-Gly bond in the poliovirus polyprotein. In other picornavirus reactions Glu may be substituted for Gln, and Ser or Thr for Gly.. With respect to regulation, replication or transcription is subject to high level of random mutations by the nucleotide analog ribavirin. Functionally, forms an icosahedral capsid of pseudo T=3 symmetry with capsid proteins VP2 and VP3. The capsid is 300 Angstroms in diameter, composed of 60 copies of each capsid protein and enclosing the viral positive strand RNA genome. Capsid protein VP1 mainly forms the vertices of the capsid. Capsid protein VP1 interacts with host cell receptor to provide virion attachment to target host cells. This attachment induces virion internalization. Tyrosine kinases are probably involved in the entry process. After binding to its receptor, the capsid undergoes conformational changes. Capsid protein VP1 N-terminus (that contains an amphipathic alpha-helix) and capsid protein VP4 are externalized. Together, they shape a pore in the host membrane through which viral genome is translocated to host cell cytoplasm. In terms of biological role, forms an icosahedral capsid of pseudo T=3 symmetry with capsid proteins VP2 and VP3. The capsid is 300 Angstroms in diameter, composed of 60 copies of each capsid protein and enclosing the viral positive strand RNA genome. Lies on the inner surface of the capsid shell. After binding to the host receptor, the capsid undergoes conformational changes. Capsid protein VP4 is released, Capsid protein VP1 N-terminus is externalized, and together, they shape a pore in the host membrane through which the viral genome is translocated into the host cell cytoplasm. Its function is as follows. Component of immature procapsids, which is cleaved into capsid proteins VP4 and VP2 after maturation. Allows the capsid to remain inactive before the maturation step. Functionally, cysteine protease that cleaves viral polyprotein and specific host proteins. It is responsible for the autocatalytic cleavage between the P1 and P2 regions, which is the first cleavage occurring in the polyprotein. Also cleaves the host translation initiation factor EIF4G1, in order to shut down the capped cellular mRNA translation. Inhibits the host nucleus-cytoplasm protein and RNA trafficking by cleaving host members of the nuclear pores. Counteracts stress granule formation probably by antagonizing its assembly or promoting its dissassembly. In terms of biological role, plays an essential role in the virus replication cycle by acting as a viroporin. Creates a pore in the host endoplasmic reticulum and as a consequence releases Ca2+ in the cytoplasm of infected cell. In turn, high levels of cytoplasmic calcium may trigger membrane trafficking and transport of viral ER-associated proteins to viroplasms, sites of viral genome replication. Induces and associates with structural rearrangements of intracellular membranes. Displays RNA-binding, nucleotide binding and NTPase activities. May play a role in virion morphogenesis and viral RNA encapsidation by interacting with the capsid protein VP3. Its function is as follows. Localizes the viral replication complex to the surface of membranous vesicles. Together with protein 3CD binds the Cis-Active RNA Element (CRE) which is involved in RNA synthesis initiation. Acts as a cofactor to stimulate the activity of 3D polymerase, maybe through a nucleid acid chaperone activity. Functionally, localizes the viral replication complex to the surface of membranous vesicles. It inhibits host cell endoplasmic reticulum-to-Golgi apparatus transport and causes the disassembly of the Golgi complex, possibly through GBF1 interaction. This would result in depletion of MHC, trail receptors and IFN receptors at the host cell surface. Plays an essential role in viral RNA replication by recruiting ACBD3 and PI4KB at the viral replication sites, thereby allowing the formation of the rearranged membranous structures where viral replication takes place. In terms of biological role, acts as a primer for viral RNA replication and remains covalently bound to viral genomic RNA. VPg is uridylylated prior to priming replication into VPg-pUpU. The oriI viral genomic sequence may act as a template for this. The VPg-pUpU is then used as primer on the genomic RNA poly(A) by the RNA-dependent RNA polymerase to replicate the viral genome. During genome replication, the VPg-RNA linkage is removed by the host TDP2, thereby accelerating replication. During the late stage of the replication cycle, host TDP2 is excluded from sites of viral RNA synthesis and encapsidation, allowing for the generation of progeny virions. Involved in the viral replication complex and viral polypeptide maturation. It exhibits protease activity with a specificity and catalytic efficiency that is different from protease 3C. Protein 3CD lacks polymerase activity. Protein 3CD binds to the 5'UTR of the viral genome. Its function is as follows. Replicates the viral genomic RNA on the surface of intracellular membranes. May form linear arrays of subunits that propagate along a strong head-to-tail interaction called interface-I. Covalently attaches UMP to a tyrosine of VPg, which is used to prime RNA synthesis. The positive stranded RNA genome is first replicated at virus induced membranous vesicles, creating a dsRNA genomic replication form. This dsRNA is then used as template to synthesize positive stranded RNA genomes. ss(+)RNA genomes are either translated, replicated or encapsidated. Functionally, major viral protease that mediates proteolytic processing of the polyprotein. Cleaves host EIF5B, contributing to host translation shutoff. Also cleaves host PABPC1, contributing to host translation shutoff. Cleaves host NLRP1, triggers host N-glycine-mediated degradation of the autoinhibitory NLRP1 N-terminal fragment. In Homo sapiens (Human), this protein is Genome polyprotein.